Consider the following 107-residue polypeptide: U1-lycotoxin-Ls1b (107 aa).

Residues 1 to 20 form the signal peptide; the sequence is MMKVLVVVALLVTHISYSSS. The propeptide occupies 21–41; sequence EGIDDLEADELLSLMANEQTR. Disulfide bonds link cysteine 44–cysteine 59, cysteine 51–cysteine 68, cysteine 58–cysteine 86, and cysteine 70–cysteine 84.

It belongs to the neurotoxin 19 (CSTX) family. 04 (U1-Lctx) subfamily. Expressed by the venom gland.

It is found in the secreted. The protein is U1-lycotoxin-Ls1b of Lycosa singoriensis (Wolf spider).